Here is a 353-residue protein sequence, read N- to C-terminus: MDKYDRLSKLGEGSYGVVYKCKNRDTGQIVAIKKFVETEDDPHIKKIALREIRMLKQLKHQNLVGLIEVFKRNRKLHLVFELCDRTVLHELEKNPHGVNDELIKKIIYQLLEALKFCHSHKCIHRDVKPENIFLTRNDQVKLGDFGFARIINTTEMYTDYVATRWYRSPELLVGDVQYGPPVDIWAVGCVYAELLTGEALWPGRSDIDQLYHIRKTLGEFLPRHISIFRTNQFFFGLSIPEPEHLEPLPSKLPNASSAQLDFLQKCFEMSPDRRFSCSELMLHGIFSNWILRIRQDESTPTGLTSKRSPNYLPLLNGNSNNLVSKNFSLQGGNHGNNNNNGNGINRNFLPTIS.

The Protein kinase domain maps to 4–286 (YDRLSKLGEG…CSELMLHGIF (283 aa)). Residues 10–18 (LGEGSYGVV) and Lys-33 contribute to the ATP site. The active-site Proton acceptor is Asp-126. The segment at 331-353 (GGNHGNNNNNGNGINRNFLPTIS) is disordered. Low complexity predominate over residues 335 to 347 (GNNNNNGNGINRN).

It belongs to the protein kinase superfamily. Ser/Thr protein kinase family. As to expression, specifically expressed in head and tail ciliated sensory neurons.

Its subcellular location is the cell projection. The protein localises to the cilium. The catalysed reaction is L-seryl-[protein] + ATP = O-phospho-L-seryl-[protein] + ADP + H(+). It catalyses the reaction L-threonyl-[protein] + ATP = O-phospho-L-threonyl-[protein] + ADP + H(+). Modulates cilium assembly. This is Cyclin-dependent kinase-like 1 from Caenorhabditis elegans.